The chain runs to 314 residues: Ribonucleoside-diphosphate reductase small subunit (314 aa).

Residues aspartate 73, glutamate 103, and histidine 106 each contribute to the Fe cation site. Tyrosine 110 is an active-site residue. Residues 160–180 (VLMILIEGIFFSSSFAAIAYL) form a helical membrane-spanning segment. The Fe cation site is built by glutamate 166, glutamate 200, and histidine 203.

This sequence belongs to the ribonucleoside diphosphate reductase small chain family. In terms of assembly, heterotetramer composed of a homodimer of the large subunit (R1) and a homodimer of the small subunit (R2). Larger multisubunit protein complex are also active, composed of (R1)n(R2)n. It depends on Fe cation as a cofactor.

The protein resides in the host membrane. The enzyme catalyses a 2'-deoxyribonucleoside 5'-diphosphate + [thioredoxin]-disulfide + H2O = a ribonucleoside 5'-diphosphate + [thioredoxin]-dithiol. Ribonucleoside-diphosphate reductase holoenzyme provides the precursors necessary for viral DNA synthesis. Allows virus growth in non-dividing cells, as well as reactivation from latency in infected hosts. Catalyzes the biosynthesis of deoxyribonucleotides from the corresponding ribonucleotides. This chain is Ribonucleoside-diphosphate reductase small subunit, found in Bovine herpesvirus 1.1 (strain Cooper) (BoHV-1).